The primary structure comprises 701 residues: Methionine--tRNA ligase (701 aa).

The 'HIGH' region signature appears at 13-23 (PYANGSIHLGH). Zn(2+) is bound by residues Cys-144, Cys-147, Cys-157, and Cys-160. A 'KMSKS' region motif is present at residues 336-340 (KMSKS). Lys-339 contacts ATP. The region spanning 600 to 701 (DFSKIDLRIA…SGAQPGMRVK (102 aa)) is the tRNA-binding domain.

Belongs to the class-I aminoacyl-tRNA synthetase family. MetG type 1 subfamily. As to quaternary structure, homodimer. Requires Zn(2+) as cofactor.

Its subcellular location is the cytoplasm. It catalyses the reaction tRNA(Met) + L-methionine + ATP = L-methionyl-tRNA(Met) + AMP + diphosphate. Functionally, is required not only for elongation of protein synthesis but also for the initiation of all mRNA translation through initiator tRNA(fMet) aminoacylation. This is Methionine--tRNA ligase from Nitrosomonas eutropha (strain DSM 101675 / C91 / Nm57).